The following is a 501-amino-acid chain: ATP synthase subunit alpha (501 aa).

An ATP-binding site is contributed by 169–176; that stretch reads GDRQTGKT.

The protein belongs to the ATPase alpha/beta chains family. As to quaternary structure, F-type ATPases have 2 components, CF(1) - the catalytic core - and CF(0) - the membrane proton channel. CF(1) has five subunits: alpha(3), beta(3), gamma(1), delta(1), epsilon(1). CF(0) has three main subunits: a(1), b(2) and c(9-12). The alpha and beta chains form an alternating ring which encloses part of the gamma chain. CF(1) is attached to CF(0) by a central stalk formed by the gamma and epsilon chains, while a peripheral stalk is formed by the delta and b chains.

It is found in the cell membrane. It carries out the reaction ATP + H2O + 4 H(+)(in) = ADP + phosphate + 5 H(+)(out). Produces ATP from ADP in the presence of a proton gradient across the membrane. The alpha chain is a regulatory subunit. The polypeptide is ATP synthase subunit alpha (Streptococcus pyogenes serotype M2 (strain MGAS10270)).